The primary structure comprises 482 residues: 2-succinylbenzoate--CoA ligase (482 aa).

Belongs to the ATP-dependent AMP-binding enzyme family. MenE subfamily.

It carries out the reaction 2-succinylbenzoate + ATP + CoA = 2-succinylbenzoyl-CoA + AMP + diphosphate. The protein operates within quinol/quinone metabolism; 1,4-dihydroxy-2-naphthoate biosynthesis; 1,4-dihydroxy-2-naphthoate from chorismate: step 5/7. It functions in the pathway quinol/quinone metabolism; menaquinone biosynthesis. Converts 2-succinylbenzoate (OSB) to 2-succinylbenzoyl-CoA (OSB-CoA). The polypeptide is 2-succinylbenzoate--CoA ligase (Bacillus anthracis (strain A0248)).